Reading from the N-terminus, the 502-residue chain is UPF0371 protein CLM_0396 (502 aa).

This sequence belongs to the UPF0371 family.

The polypeptide is UPF0371 protein CLM_0396 (Clostridium botulinum (strain Kyoto / Type A2)).